The primary structure comprises 126 residues: Fatty acid-binding protein 2, liver (126 aa).

Cholate is bound by residues 54–56 (TPN), 99–101 (HIQ), and R121.

The protein belongs to the calycin superfamily. Fatty-acid binding protein (FABP) family.

The protein localises to the cytoplasm. In terms of biological role, binds free fatty acids and their coenzyme A derivatives, bilirubin, and some other small molecules in the cytoplasm. May be involved in intracellular lipid transport. The specificity of axolotl L-FABP differs from that of LB-FABP. Binds 2 ligands per protein molecule. This chain is Fatty acid-binding protein 2, liver, found in Ambystoma mexicanum (Axolotl).